Reading from the N-terminus, the 285-residue chain is Cyclin-Y-like protein 1B (285 aa).

Residues 111-209 (PKRNCIFRHF…CFLELLEFNI (99 aa)) form the Cyclin N-terminal domain.

It belongs to the cyclin family. Cyclin Y subfamily.

The protein is Cyclin-Y-like protein 1B of Homo sapiens (Human).